The chain runs to 553 residues: Rhodopsin kinase GRK7 (553 aa).

At Ser36 the chain carries Phosphoserine; by PKA. Residues 56–176 (FHSLCEQQPI…VTSAFYDKFL (121 aa)) enclose the RGS domain. Residues 191–454 (FTEFRVLGKG…SDDPRKHHFF (264 aa)) form the Protein kinase domain. Residues 197–205 (LGKGGFGEV) and Lys220 contribute to the ATP site. The active-site Proton acceptor is the Asp316. An AGC-kinase C-terminal domain is found at 455-520 (KTINFPRLEA…GAVPIAWQEE (66 aa)). Cys550 carries the cysteine methyl ester modification. Cys550 carries the S-geranylgeranyl cysteine lipid modification. A propeptide spans 551–553 (LLL) (removed in mature form).

It belongs to the protein kinase superfamily. AGC Ser/Thr protein kinase family. GPRK subfamily. In terms of assembly, interacts (when prenylated) with PDE6D; this promotes release from membranes. In terms of processing, autophosphorylated in vitro at Ser-490. Phosphorylation at Ser-36 is regulated by light and activated by cAMP. In terms of tissue distribution, retinal cones, outer and inner segments.

The protein resides in the membrane. The enzyme catalyses L-threonyl-[rhodopsin] + ATP = O-phospho-L-threonyl-[rhodopsin] + ADP + H(+). It catalyses the reaction L-seryl-[rhodopsin] + ATP = O-phospho-L-seryl-[rhodopsin] + ADP + H(+). Its activity is regulated as follows. Inhibited by phosphorylation of Ser-36. Its function is as follows. Retina-specific kinase involved in the shutoff of the photoresponse and adaptation to changing light conditions via cone opsin phosphorylation, including rhodopsin (RHO). The chain is Rhodopsin kinase GRK7 (GRK7) from Homo sapiens (Human).